The sequence spans 232 residues: MKSKLIILLTLVPFSSFSTGNNFEINKTRVIYSDSTPSVQISNNKAYPLIIQSNVWDESNNKNHDFIATPPIFKMESESRNIIKIIKTTINLPDSQESMRWLCIESMPPIEKSTKINRKEGRTDSINISIRGCIKLIYRPASVPSPVFNNIVEKLKWHKNGKYLVLKNNTPYYISFSEVFFDSDKVNNAKDILYVKPYSEKKIDISNRIIKKIKWAMIDDAGAKTKLYESIL.

An N-terminal signal peptide occupies residues 1–20; the sequence is MKSKLIILLTLVPFSSFSTG.

It belongs to the periplasmic pilus chaperone family.

Its subcellular location is the periplasm. Involved in the biogenesis of the CS6 fimbria. This Escherichia coli protein is Chaperone protein CssC (cssC).